The primary structure comprises 550 residues: (S)-beta-bisabolene synthase (550 aa).

4 residues coordinate Mg(2+): Asp-303, Asp-307, Ser-451, and Glu-455. Positions Asp-303 to Asp-307 match the DDXXD motif motif.

This sequence belongs to the terpene synthase family. Tpsa subfamily. Mg(2+) serves as cofactor. The cofactor is Mn(2+). In terms of tissue distribution, expressed only in young rhizomes. Not detected in leaves, roots and mature rhizomes.

The enzyme catalyses (2E,6E)-farnesyl diphosphate = (S)-beta-bisabolene + diphosphate. Functionally, sesquiterpene synthase involved in the biosynthesis of bisabolene. This chain is (S)-beta-bisabolene synthase (TPS1), found in Zingiber officinale (Ginger).